The following is a 510-amino-acid chain: NAD(P)H-quinone oxidoreductase subunit 2 B, chloroplastic (510 aa).

A run of 13 helical transmembrane segments spans residues 24 to 44 (LLLF…GLIL), 57 to 77 (IPWL…ALLF), 99 to 119 (IFQF…VEYI), 124 to 144 (MAIT…MFLC), 149 to 169 (LITI…LSGY), 183 to 203 (YLLM…WLYG), 227 to 247 (PGIS…LSPA), 295 to 315 (WHLL…LIAI), 323 to 343 (MLAY…IVGD), 354 to 374 (YMLF…LFGL), 395 to 415 (ALSL…AGFF), 418 to 438 (LYLF…IGLL), and 484 to 504 (MIVC…IIAI).

The protein belongs to the complex I subunit 2 family. In terms of assembly, NDH is composed of at least 16 different subunits, 5 of which are encoded in the nucleus.

It localises to the plastid. Its subcellular location is the chloroplast thylakoid membrane. The enzyme catalyses a plastoquinone + NADH + (n+1) H(+)(in) = a plastoquinol + NAD(+) + n H(+)(out). It carries out the reaction a plastoquinone + NADPH + (n+1) H(+)(in) = a plastoquinol + NADP(+) + n H(+)(out). NDH shuttles electrons from NAD(P)H:plastoquinone, via FMN and iron-sulfur (Fe-S) centers, to quinones in the photosynthetic chain and possibly in a chloroplast respiratory chain. The immediate electron acceptor for the enzyme in this species is believed to be plastoquinone. Couples the redox reaction to proton translocation, and thus conserves the redox energy in a proton gradient. In Helianthus annuus (Common sunflower), this protein is NAD(P)H-quinone oxidoreductase subunit 2 B, chloroplastic.